An 88-amino-acid chain; its full sequence is Small ribosomal subunit protein bS20 (88 aa).

The interval M1–R33 is disordered.

The protein belongs to the bacterial ribosomal protein bS20 family.

Functionally, binds directly to 16S ribosomal RNA. The polypeptide is Small ribosomal subunit protein bS20 (Rhodopseudomonas palustris (strain BisB5)).